The sequence spans 307 residues: Putative S-adenosyl-L-methionine-dependent methyltransferase MMAR_4570 (307 aa).

Residues Asp-128 and 157 to 158 each bind S-adenosyl-L-methionine; that span reads DL.

The protein belongs to the UPF0677 family.

Its function is as follows. Exhibits S-adenosyl-L-methionine-dependent methyltransferase activity. This Mycobacterium marinum (strain ATCC BAA-535 / M) protein is Putative S-adenosyl-L-methionine-dependent methyltransferase MMAR_4570.